A 229-amino-acid chain; its full sequence is ATP-dependent Clp protease proteolytic subunit (229 aa).

Catalysis depends on Ser-101, which acts as the Nucleophile. The active site involves His-126.

This sequence belongs to the peptidase S14 family. Component of the chloroplastic Clp protease core complex.

It localises to the plastid. The protein localises to the chloroplast stroma. It carries out the reaction Hydrolysis of proteins to small peptides in the presence of ATP and magnesium. alpha-casein is the usual test substrate. In the absence of ATP, only oligopeptides shorter than five residues are hydrolyzed (such as succinyl-Leu-Tyr-|-NHMec, and Leu-Tyr-Leu-|-Tyr-Trp, in which cleavage of the -Tyr-|-Leu- and -Tyr-|-Trp bonds also occurs).. Cleaves peptides in various proteins in a process that requires ATP hydrolysis. Has a chymotrypsin-like activity. Plays a major role in the degradation of misfolded proteins. The protein is ATP-dependent Clp protease proteolytic subunit of Mesostigma viride (Green alga).